Consider the following 130-residue polypeptide: Small ribosomal subunit protein uS11 (130 aa).

The protein belongs to the universal ribosomal protein uS11 family. As to quaternary structure, part of the 30S ribosomal subunit. Interacts with proteins S7 and S18. Binds to IF-3.

Located on the platform of the 30S subunit, it bridges several disparate RNA helices of the 16S rRNA. Forms part of the Shine-Dalgarno cleft in the 70S ribosome. This Gluconacetobacter diazotrophicus (strain ATCC 49037 / DSM 5601 / CCUG 37298 / CIP 103539 / LMG 7603 / PAl5) protein is Small ribosomal subunit protein uS11.